The sequence spans 580 residues: Thymidine kinase (580 aa).

2 disordered regions span residues 1–60 (MAEG…KSVK) and 133–157 (VCGR…ASMG). Residues 137–149 (PPLPPPNHPPPAT) show a composition bias toward pro residues. Position 260–267 (260–267 (GVMGVGKS)) interacts with ATP. E287 acts as the Proton acceptor in catalysis. Q325 contacts substrate. R415 serves as a coordination point for ATP. R421 lines the substrate pocket.

Belongs to the herpesviridae thymidine kinase family. As to quaternary structure, homodimer.

The enzyme catalyses thymidine + ATP = dTMP + ADP + H(+). In terms of biological role, catalyzes the transfer of the gamma-phospho group of ATP to thymidine to generate dTMP in the salvage pathway of pyrimidine synthesis. The dTMP serves as a substrate for DNA polymerase during viral DNA replication. Allows the virus to be reactivated and to grow in non-proliferative cells lacking a high concentration of phosphorylated nucleic acid precursors. In Human herpesvirus 8 type P (isolate GK18) (HHV-8), this protein is Thymidine kinase.